The following is a 261-amino-acid chain: Indole-3-glycerol phosphate synthase (261 aa).

It belongs to the TrpC family.

The enzyme catalyses 1-(2-carboxyphenylamino)-1-deoxy-D-ribulose 5-phosphate + H(+) = (1S,2R)-1-C-(indol-3-yl)glycerol 3-phosphate + CO2 + H2O. Its pathway is amino-acid biosynthesis; L-tryptophan biosynthesis; L-tryptophan from chorismate: step 4/5. The polypeptide is Indole-3-glycerol phosphate synthase (Paraburkholderia phytofirmans (strain DSM 17436 / LMG 22146 / PsJN) (Burkholderia phytofirmans)).